The sequence spans 505 residues: Glycerol kinase (505 aa).

T14 lines the ADP pocket. Residues T14, T15, and S16 each coordinate ATP. T14 contacts sn-glycerol 3-phosphate. R18 contributes to the ADP binding site. Sn-glycerol 3-phosphate-binding residues include R84, E85, Y136, and D246. Glycerol contacts are provided by R84, E85, Y136, D246, and Q247. T268 and G311 together coordinate ADP. Residues T268, G311, Q315, and G412 each contribute to the ATP site. 2 residues coordinate ADP: G412 and N416.

This sequence belongs to the FGGY kinase family.

The catalysed reaction is glycerol + ATP = sn-glycerol 3-phosphate + ADP + H(+). It participates in polyol metabolism; glycerol degradation via glycerol kinase pathway; sn-glycerol 3-phosphate from glycerol: step 1/1. Its activity is regulated as follows. Inhibited by fructose 1,6-bisphosphate (FBP). Key enzyme in the regulation of glycerol uptake and metabolism. Catalyzes the phosphorylation of glycerol to yield sn-glycerol 3-phosphate. This is Glycerol kinase from Vibrio cholerae serotype O1 (strain ATCC 39315 / El Tor Inaba N16961).